A 457-amino-acid polypeptide reads, in one-letter code: Flavin-containing monooxygenase FMO GS-OX2 (457 aa).

Gly17–Gly22 is a binding site for FAD. Gly211–Gly216 lines the NADP(+) pocket.

This sequence belongs to the FMO family.

The enzyme catalyses a (Z)-omega-(methylsulfanyl)-N-sulfo-alkylhydroximate S-glucoside + NADPH + O2 + H(+) = a (Z)-omega-(methylsulfinyl)-alkyl-glucosinolate + NADP(+) + H2O. Functionally, catalyzes the conversion of methylthioalkyl glucosinolates of any chain length into methylsulfinylalkyl glucosinolates. This chain is Flavin-containing monooxygenase FMO GS-OX2 (FMOGS-OX2), found in Arabidopsis thaliana (Mouse-ear cress).